A 228-amino-acid chain; its full sequence is MKKKAVILLSGGPDSTTVLEIVSKTDYEIYALSFNYHRRNSLEVQKIQGLIKDYNVKQHRVINIDLQSFIGSALTDDNIDVPKFKNTDQLPSDIPVTYVPARNTIFLSYALGVVEVIGARDIFIGVHTNDYTNYPDCRPEYIKSFEAMANLATRVGVNGEKITIHAPLINMTKEQIIKKGLELGVDYSKTISCYDPTEDGLSCGQCLSCIARLDAFKKNNVQDPIKYV.

9 to 19 (LSGGPDSTTVL) serves as a coordination point for ATP. Residues Cys193, Cys203, Cys206, and Cys209 each contribute to the Zn(2+) site.

It belongs to the QueC family. Requires Zn(2+) as cofactor.

The enzyme catalyses 7-carboxy-7-deazaguanine + NH4(+) + ATP = 7-cyano-7-deazaguanine + ADP + phosphate + H2O + H(+). It functions in the pathway purine metabolism; 7-cyano-7-deazaguanine biosynthesis. Its function is as follows. Catalyzes the ATP-dependent conversion of 7-carboxy-7-deazaguanine (CDG) to 7-cyano-7-deazaguanine (preQ(0)). The polypeptide is 7-cyano-7-deazaguanine synthase (Rickettsia peacockii (strain Rustic)).